Reading from the N-terminus, the 665-residue chain is Methionine--tRNA ligase (665 aa).

A 'HIGH' region motif is present at residues 12–22 (YYPSGKLHIGS). The short motif at 308 to 312 (KMSKS) is the 'KMSKS' region element. Lys311 contacts ATP. Residues 562-665 (TFDAVEIRVA…SSVPNGSIIG (104 aa)) form the tRNA-binding domain.

The protein belongs to the class-I aminoacyl-tRNA synthetase family. MetG type 2B subfamily. In terms of assembly, homodimer.

Its subcellular location is the cytoplasm. The enzyme catalyses tRNA(Met) + L-methionine + ATP = L-methionyl-tRNA(Met) + AMP + diphosphate. Is required not only for elongation of protein synthesis but also for the initiation of all mRNA translation through initiator tRNA(fMet) aminoacylation. This Streptococcus pyogenes serotype M1 protein is Methionine--tRNA ligase (metG).